Consider the following 349-residue polypeptide: tRNA pseudouridine synthase D (349 aa).

Phe-26 provides a ligand contact to substrate. Asp-79 serves as the catalytic Nucleophile. Asn-128 is a substrate binding site. The TRUD domain occupies 154–302 (GVPNYFGSQR…VEGSRRAVLL (149 aa)). Position 328 (Phe-328) interacts with substrate.

The protein belongs to the pseudouridine synthase TruD family.

The catalysed reaction is uridine(13) in tRNA = pseudouridine(13) in tRNA. Its function is as follows. Responsible for synthesis of pseudouridine from uracil-13 in transfer RNAs. The sequence is that of tRNA pseudouridine synthase D from Yersinia pseudotuberculosis serotype IB (strain PB1/+).